We begin with the raw amino-acid sequence, 320 residues long: Malate dehydrogenase (320 aa).

NAD(+) contacts are provided by residues 10-15 (GAGQIG) and aspartate 34. Substrate contacts are provided by arginine 83 and arginine 89. NAD(+)-binding positions include asparagine 96 and 119–121 (ITN). Residues asparagine 121 and arginine 152 each contribute to the substrate site. The Proton acceptor role is filled by histidine 176.

The protein belongs to the LDH/MDH superfamily. MDH type 3 family.

It carries out the reaction (S)-malate + NAD(+) = oxaloacetate + NADH + H(+). In terms of biological role, catalyzes the reversible oxidation of malate to oxaloacetate. In Ruegeria pomeroyi (strain ATCC 700808 / DSM 15171 / DSS-3) (Silicibacter pomeroyi), this protein is Malate dehydrogenase.